Here is a 115-residue protein sequence, read N- to C-terminus: Large ribosomal subunit protein bL20c (115 aa).

The protein belongs to the bacterial ribosomal protein bL20 family.

It localises to the plastid. The protein resides in the chloroplast. Its function is as follows. Binds directly to 23S ribosomal RNA and is necessary for the in vitro assembly process of the 50S ribosomal subunit. It is not involved in the protein synthesizing functions of that subunit. This chain is Large ribosomal subunit protein bL20c, found in Pyropia yezoensis (Susabi-nori).